A 32-amino-acid chain; its full sequence is Photosystem I reaction center subunit XII (32 aa).

A helical transmembrane segment spans residues 10–27 (VVALISALVTGILALRLG).

Belongs to the PsaM family.

It is found in the plastid. The protein resides in the chloroplast thylakoid membrane. The chain is Photosystem I reaction center subunit XII from Zygnema circumcarinatum (Green alga).